Reading from the N-terminus, the 119-residue chain is Large ribosomal subunit protein uL18 (119 aa).

The protein belongs to the universal ribosomal protein uL18 family. In terms of assembly, part of the 50S ribosomal subunit; part of the 5S rRNA/L5/L18/L25 subcomplex. Contacts the 5S and 23S rRNAs.

Its function is as follows. This is one of the proteins that bind and probably mediate the attachment of the 5S RNA into the large ribosomal subunit, where it forms part of the central protuberance. This chain is Large ribosomal subunit protein uL18, found in Lactobacillus johnsonii (strain CNCM I-12250 / La1 / NCC 533).